The chain runs to 223 residues: Putative germin-like protein 2-2 (223 aa).

The first 28 residues, 1-28 (MAAVGACFLQQLAVVALLALWCSHGAIA), serve as a signal peptide directing secretion. An intrachain disulfide couples cysteine 38 to cysteine 53. The Cupin type-1 domain occupies 67–217 (SGLHMAGNTT…AFQVDKNIID (151 aa)). 2 N-linked (GlcNAc...) asparagine glycosylation sites follow: asparagine 74 and asparagine 82. Mn(2+) is bound by residues histidine 115, histidine 117, glutamate 122, and histidine 163. N-linked (GlcNAc...) asparagine glycosylation is present at asparagine 168.

The protein belongs to the germin family. Oligomer (believed to be a pentamer but probably hexamer).

It localises to the secreted. The protein localises to the extracellular space. It is found in the apoplast. May play a role in plant defense. Probably has no oxalate oxidase activity even if the active site is conserved. This Oryza sativa subsp. japonica (Rice) protein is Putative germin-like protein 2-2.